The primary structure comprises 358 residues: tRNA-specific 2-thiouridylase MnmA (358 aa).

Residues 6-13 (LVSGGVDS) and isoleucine 32 each bind ATP. An interaction with target base in tRNA region spans residues 93–95 (NPD). Cysteine 98 acts as the Nucleophile in catalysis. Cysteine 98 and cysteine 193 are disulfide-bonded. Residue glycine 121 coordinates ATP. Residues 143 to 145 (KDQ) form an interaction with tRNA region. The Cysteine persulfide intermediate role is filled by cysteine 193.

This sequence belongs to the MnmA/TRMU family.

It is found in the cytoplasm. It catalyses the reaction S-sulfanyl-L-cysteinyl-[protein] + uridine(34) in tRNA + AH2 + ATP = 2-thiouridine(34) in tRNA + L-cysteinyl-[protein] + A + AMP + diphosphate + H(+). Functionally, catalyzes the 2-thiolation of uridine at the wobble position (U34) of tRNA, leading to the formation of s(2)U34. The polypeptide is tRNA-specific 2-thiouridylase MnmA (Parabacteroides distasonis (strain ATCC 8503 / DSM 20701 / CIP 104284 / JCM 5825 / NCTC 11152)).